The sequence spans 199 residues: V-type proton ATPase subunit E (199 aa).

It belongs to the V-ATPase E subunit family.

Functionally, produces ATP from ADP in the presence of a proton gradient across the membrane. The polypeptide is V-type proton ATPase subunit E (Clostridium botulinum (strain Loch Maree / Type A3)).